The chain runs to 91 residues: MKIISKMLVGALALAVTNVYAAELMTKAEFEKVESQYEKIGDISTSNEMSTADAKEDLIKKADEKGADVLVLTSGQTDNKIHGTANIYKKK.

An N-terminal signal peptide occupies residues methionine 1–alanine 21.

The protein belongs to the BhsA/McbA family.

Its subcellular location is the periplasm. This is an uncharacterized protein from Escherichia coli (strain K12).